Reading from the N-terminus, the 634-residue chain is Dynein axonemal assembly factor 1 (634 aa).

The interval 1–80 (MHPEVSEPPV…SRDDREDRGP (80 aa)) is disordered. Positions 22–42 (AGDHGDAGPGIRKEEISETKE) are enriched in basic and acidic residues. The span at 48 to 62 (CTTSCPSQQQPSGDN) shows a compositional bias: polar residues. A compositionally biased stretch (basic and acidic residues) spans 70-80 (HSRDDREDRGP). 6 LRR repeats span residues 101-123 (ALND…EEYT), 124-145 (GLRC…QAQS), 146-167 (ELRC…EPLQ), 168-189 (KLDA…SCLP), 190-211 (VLNT…EHLR), and 215-236 (RLCV…SVLE). The 40-residue stretch at 249-288 (NPVTKHIPNYRRTVTVRLKHLTYLDDRPVFPKDRACAEAW) folds into the LRRCT domain. Residues 326–336 (EERKKARDRGE) show a composition bias toward basic and acidic residues. The segment at 326 to 358 (EERKKARDRGETPLPDSEGSIPTSPEAEEKQPM) is disordered. Phosphoserine is present on serine 349. Threonine 462 carries the phosphothreonine modification. Phosphoserine is present on residues serine 465 and serine 488. 2 disordered regions span residues 481–505 (ISSL…ATPT) and 559–634 (ELND…FGLD).

It belongs to the DNAAF1 family.

Its subcellular location is the cell projection. The protein localises to the cilium. Cilium-specific protein required for the stability of the ciliary architecture. Plays a role in cytoplasmic preassembly of dynein arms. Involved in regulation of microtubule-based cilia and actin-based brush border microvilli. The chain is Dynein axonemal assembly factor 1 (Dnaaf1) from Mus musculus (Mouse).